The primary structure comprises 128 residues: uncharacterized protein (128 aa).

4 helical membrane-spanning segments follow: residues 2–22 (LPFYFLSVATNAAIGFILTVL), 34–54 (FLYDATFSLVLALLSGIAAVC), 64–84 (LPVLGDLIPTLAGGTGCALFL), and 108–128 (LGLFSLAASILHLLFAPTLFL).

It is found in the cell membrane. This is an uncharacterized protein from Treponema pallidum (strain Nichols).